A 524-amino-acid polypeptide reads, in one-letter code: MNNNDKWARYCDLLYSDDSLGFWLDISRMDVAINDFEDFNEIYSKAFDALESLENGSIANIDEGRQVGHYWLRNPKVAPSPEISDSITKEIQDISKFGSSILNGEITNSDGEKYTDVFWIGIGGSGLGPLLIKESFKRESIGLDLHFLDNVDPEGISHKLNSILPNLNSTLFVVVSKSGGTPEPLIGMEQAMKFVRDNNQNWSSRAIAITSKGSKLDLLAHNENWLDIFDLPDWVGGRTSITGAVGLLPAALIGADINKFLNGASQMDALTRVKDIKNNPAALLSLAWFKSGNGKGLRDMVVLPYRDRLEVFSRYLQQLVMESLGKKFDRDENQVNQGIAVYGNKGSTDQHAYVQQLRDGIDNFFVNFIEILHDPLEIVEVKNKRPGDYLSGFLQGTRSALTEGGRQNLTITFKSFDESSLGALIALFERAVSLYAELINVNAYNQPGVEAGKKAATKIIKLQKEIEELLDDGKQRTLNEINDALSSDSTESIYLILRKLSENSDHYSMIGNQSNPDKLIISKT.

Glutamate 322 functions as the Proton donor in the catalytic mechanism. Catalysis depends on residues histidine 351 and lysine 453.

The protein belongs to the GPI family.

It localises to the cytoplasm. It catalyses the reaction alpha-D-glucose 6-phosphate = beta-D-fructose 6-phosphate. It functions in the pathway carbohydrate biosynthesis; gluconeogenesis. The protein operates within carbohydrate degradation; glycolysis; D-glyceraldehyde 3-phosphate and glycerone phosphate from D-glucose: step 2/4. Its function is as follows. Catalyzes the reversible isomerization of glucose-6-phosphate to fructose-6-phosphate. This chain is Glucose-6-phosphate isomerase, found in Prochlorococcus marinus (strain NATL2A).